A 452-amino-acid polypeptide reads, in one-letter code: Phosphoglucosamine mutase (452 aa).

Ser-108 functions as the Phosphoserine intermediate in the catalytic mechanism. Residues Ser-108, Asp-247, Asp-249, and Asp-251 each contribute to the Mg(2+) site. Ser-108 carries the phosphoserine modification.

Belongs to the phosphohexose mutase family. It depends on Mg(2+) as a cofactor. Activated by phosphorylation.

It catalyses the reaction alpha-D-glucosamine 1-phosphate = D-glucosamine 6-phosphate. Functionally, catalyzes the conversion of glucosamine-6-phosphate to glucosamine-1-phosphate. This is Phosphoglucosamine mutase from Paraburkholderia phytofirmans (strain DSM 17436 / LMG 22146 / PsJN) (Burkholderia phytofirmans).